The chain runs to 389 residues: Trans-2-enoyl-CoA reductase [NADH] (389 aa).

NAD(+) contacts are provided by residues 47-52 (GASTGY), 73-74 (FE), 110-111 (DA), and 138-139 (LA). Tyr-224 is a binding site for substrate. Residue Tyr-234 is the Proton donor of the active site. NAD(+) is bound by residues Lys-243 and 272–274 (LVT).

This sequence belongs to the TER reductase family. In terms of assembly, monomer.

The catalysed reaction is a 2,3-saturated acyl-CoA + NAD(+) = a (2E)-enoyl-CoA + NADH + H(+). It functions in the pathway lipid metabolism; fatty acid biosynthesis. Involved in the fatty acid synthesis (FAS II). Catalyzes the reduction of a carbon-carbon double bond in an enoyl moiety that is covalently linked to a coenzyme A (CoA). The protein is Trans-2-enoyl-CoA reductase [NADH] of Clostridium perfringens (strain SM101 / Type A).